Here is a 580-residue protein sequence, read N- to C-terminus: MESSAKRKMDPDNPDEGPSSKVPRPETPVTKATTFLQTMLRKEVNSQLSLGDPLFPELAEESLKTFEQVTEDCNENPEKDVLAELGDILAQAVNHAGIDSSSTGPTLTTHSCSVSSAPLNKPTPTSVAVTNTPLPGASATPELSPRKKPRKTTRPFKVIIKPPVPPAPIMLPLIKQEDIKPEPDFTIQYRNKIIDTAGCIVISDSEEEQGEEVETRGATASSPSTGSGTPRVTSPTHPLSQMNHPPLPDPLGRPDEDSSSSSSSSCSSASDSESESEEMKCSSGGGASVTSSHHGRGGFGGAASSSLLSCGHQSSGGASTGPRKKKSKRISELDNEKVRNIMKDKNTPFCTPNVQTRRGRVKIDEVSRMFRNTNRSLEYKNLPFTIPSMHQVLDEAIKACKTMQVNNKGIQIIYTRNHEVKSEVDAVRCRLGTMCNLALSTPFLMEHTMPVTHPPEVAQRTADACNEGVKAAWSLKELHTHQLCPRSSDYRNMIIHAATPVDLLGALNLCLPLMQKFPKQVMVRIFSTNQGGFMLPIYETAAKAYAVGQFEQPTETPPEDLDTLSLAIEAAIQDLRNKSQ.

The span at 1 to 11 (MESSAKRKMDP) shows a compositional bias: basic and acidic residues. Disordered regions lie at residues 1–30 (MESSAKRKMDPDNPDEGPSSKVPRPETPVT) and 99–161 (DSSS…VIIK). The segment covering 99–133 (DSSSTGPTLTTHSCSVSSAPLNKPTPTSVAVTNTP) has biased composition (polar residues). Residues K175 and K180 each participate in a glycyl lysine isopeptide (Lys-Gly) (interchain with G-Cter in SUMO) cross-link. The SUMO-interacting motif 1/SIM1 signature appears at 199-202 (CIVI). Phosphoserine; by host CK2 is present on residues S203 and S205. The interval 206–335 (EEEQGEEVET…KSKRISELDN (130 aa)) is disordered. 3 stretches are compositionally biased toward low complexity: residues 216-236 (RGATASSPSTGSGTPRVTSPT), 259-271 (SSSSSSSCSSASD), and 302-317 (AASSSLLSCGHQSSGG). The SUMO-interacting motif 1/SIM2 signature appears at 410–413 (IQII). The SUMO-interacting motif 1/SIM3 signature appears at 501–504 (VDLL).

It belongs to the HHV-5 IE2 protein family. Interacts with host SUMO-modified form of TATA-binding protein (TBP)-associated factor 12/TAF12 in a SIM-dependent manner; this interaction increases the transactivation activity of IE2. Interacts with host CHAF1A. Interacts with several components of the host transcriptional machinery including TBP, TF2B and CREB1. Interacts with host DNA replication licensing factor MCM3. Interacts with host PLSCR1; this interaction inhibits IE2 transactivating activity. Post-translationally, phosphorylated by host CK2 at Ser-203 and Ser-205; leading to enhanced SUMOylation. SUMOylated; SUMOylation is enhanced when IE2 is phosphorylated by host CK2. The sumoylation is necessary for efficient replication of the virus and thus for the function of this viral transcription factor.

It localises to the host nucleus. Stimulates viral early and late gene expression and thus play a crucial role in the regulation of productive infection. Selectively drives host RNA Pol II transcription initiation at a subset of viral early-late and late promoters without substantially affecting Pol II transcription of expressed host genes. Mechanistically, forms a repressive complex at the major immediate-early promoter region involving direct association with host nucleosomes and TBP. Concerning activation, stimulates transcription by binding nearby, but not within, core promoter regions. In addition, activates quiescent cells to reenter the cell cycle and up-regulates several E2F-responsive genes, which are responsible for pushing the cell into S phase. In S-phase, inhibits cellular DNA synthesis and blocks further cell cycle progression. This is Viral transcription factor IE2 (UL122) from Human cytomegalovirus (strain AD169) (HHV-5).